A 396-amino-acid chain; its full sequence is Elongation factor Tu (396 aa).

The tr-type G domain maps to 10–206; it reads KPHINVGTIG…QMDAYIPEPQ (197 aa). The G1 stretch occupies residues 19–26; the sequence is GHVDHGKT. 19–26 lines the GTP pocket; it reads GHVDHGKT. Residue T26 participates in Mg(2+) binding. The tract at residues 60-64 is G2; it reads GITIA. A G3 region spans residues 81–84; sequence DCPG. GTP contacts are provided by residues 81-85 and 136-139; these read DCPGH and NKAD. Positions 136 to 139 are G4; that stretch reads NKAD. The tract at residues 174-176 is G5; sequence SAL.

This sequence belongs to the TRAFAC class translation factor GTPase superfamily. Classic translation factor GTPase family. EF-Tu/EF-1A subfamily. As to quaternary structure, monomer.

The protein localises to the cytoplasm. It carries out the reaction GTP + H2O = GDP + phosphate + H(+). In terms of biological role, GTP hydrolase that promotes the GTP-dependent binding of aminoacyl-tRNA to the A-site of ribosomes during protein biosynthesis. The polypeptide is Elongation factor Tu (Nitrosococcus oceani (strain ATCC 19707 / BCRC 17464 / JCM 30415 / NCIMB 11848 / C-107)).